A 104-amino-acid polypeptide reads, in one-letter code: Phosphoribosyl-ATP pyrophosphatase (104 aa).

It belongs to the PRA-PH family.

It is found in the cytoplasm. The enzyme catalyses 1-(5-phospho-beta-D-ribosyl)-ATP + H2O = 1-(5-phospho-beta-D-ribosyl)-5'-AMP + diphosphate + H(+). Its pathway is amino-acid biosynthesis; L-histidine biosynthesis; L-histidine from 5-phospho-alpha-D-ribose 1-diphosphate: step 2/9. In Methanocorpusculum labreanum (strain ATCC 43576 / DSM 4855 / Z), this protein is Phosphoribosyl-ATP pyrophosphatase.